We begin with the raw amino-acid sequence, 214 residues long: Ribonuclease HII (214 aa).

The RNase H type-2 domain maps to 26–214 (EIVCGVDEAG…PVREAFDLIR (189 aa)). Asp-32, Glu-33, and Asp-124 together coordinate a divalent metal cation.

The protein belongs to the RNase HII family. Mn(2+) serves as cofactor. It depends on Mg(2+) as a cofactor.

Its subcellular location is the cytoplasm. It carries out the reaction Endonucleolytic cleavage to 5'-phosphomonoester.. Functionally, endonuclease that specifically degrades the RNA of RNA-DNA hybrids. The polypeptide is Ribonuclease HII (Burkholderia mallei (strain NCTC 10247)).